The sequence spans 73 residues: Disintegrin molossin (73 aa).

Residues 1 to 73 (EAGIECDCGS…ADCPRNRFHA (73 aa)) form the Disintegrin domain. Cystine bridges form between Cys-6–Cys-21, Cys-8–Cys-16, Cys-15–Cys-38, Cys-29–Cys-35, Cys-34–Cys-59, and Cys-47–Cys-66. A Cell attachment site motif is present at residues 51 to 53 (RGD).

Belongs to the venom metalloproteinase (M12B) family. P-II subfamily. P-IIa sub-subfamily. In terms of assembly, monomer (disintegrin). In terms of tissue distribution, expressed by the venom gland.

It is found in the secreted. Functionally, inhibits fibrinogen interaction with platelets. Acts by binding to alpha-IIb/beta-3 (ITGA2B/ITGB3) on the platelet surface and inhibits aggregation induced by ADP, thrombin, platelet-activating factor and collagen. The protein is Disintegrin molossin of Crotalus molossus molossus (Northern black-tailed rattlesnake).